The primary structure comprises 233 residues: MSKLTKRQKEINSRIEHEKQYTIEEAVQILNDLPPLKFKESIDIAVNLGVDPRKSDQVVRGATNLPAGTGKTKRVAVFAQGAAAEAAKEAGADIVGFEDLAESIKAGNMDFDVVIAAPDAMRVVGQLGTILGPRGLMPNPKVGTVTPNVAEAVLNAKAGQAQYRVDKAGIIHTTIGQVGFTAEQVIQNAEALISDLRRAKPATSKGTFIKKITLSSTMGPGLSIDPVPYRTAK.

Belongs to the universal ribosomal protein uL1 family. As to quaternary structure, part of the 50S ribosomal subunit.

Functionally, binds directly to 23S rRNA. The L1 stalk is quite mobile in the ribosome, and is involved in E site tRNA release. In terms of biological role, protein L1 is also a translational repressor protein, it controls the translation of the L11 operon by binding to its mRNA. In Psychrobacter arcticus (strain DSM 17307 / VKM B-2377 / 273-4), this protein is Large ribosomal subunit protein uL1.